Here is a 294-residue protein sequence, read N- to C-terminus: HTH-type transcriptional regulator ClcR (294 aa).

Positions 1–58 (MEFRQLRYFIAVAEEGNIGAAARRLHISQPPITRQIQALEQDLGVVLFERTHRGVELT) constitute an HTH lysR-type domain. A DNA-binding region (H-T-H motif) is located at residues 18-37 (IGAAARRLHISQPPITRQIQ).

This sequence belongs to the LysR transcriptional regulatory family.

The protein resides in the cytoplasm. In terms of biological role, involved in regulation of chlorinated catechol metabolism. Transcriptional activator of the clcABD chlorocatechol oxidative operon. The polypeptide is HTH-type transcriptional regulator ClcR (clcR) (Pseudomonas putida (Arthrobacter siderocapsulatus)).